The primary structure comprises 428 residues: Enolase (428 aa).

Glutamine 163 provides a ligand contact to (2R)-2-phosphoglycerate. Glutamate 205 serves as the catalytic Proton donor. 3 residues coordinate Mg(2+): aspartate 242, glutamate 286, and aspartate 313. The (2R)-2-phosphoglycerate site is built by lysine 338, arginine 367, serine 368, and lysine 389. The active-site Proton acceptor is lysine 338.

Belongs to the enolase family. Requires Mg(2+) as cofactor.

The protein resides in the cytoplasm. The protein localises to the secreted. Its subcellular location is the cell surface. The catalysed reaction is (2R)-2-phosphoglycerate = phosphoenolpyruvate + H2O. It functions in the pathway carbohydrate degradation; glycolysis; pyruvate from D-glyceraldehyde 3-phosphate: step 4/5. In terms of biological role, catalyzes the reversible conversion of 2-phosphoglycerate (2-PG) into phosphoenolpyruvate (PEP). It is essential for the degradation of carbohydrates via glycolysis. The chain is Enolase from Geobacter sulfurreducens (strain ATCC 51573 / DSM 12127 / PCA).